We begin with the raw amino-acid sequence, 469 residues long: Neuraminidase (469 aa).

The Intravirion portion of the chain corresponds to 1 to 6; sequence MNPNQK. Residues 7–29 traverse the membrane as a helical segment; it reads IITIGSVSLTIATICFLMQIAIQ. The tract at residues 11-33 is involved in apical transport and lipid raft association; sequence GSVSLTIATICFLMQIAIQVTTV. The Virion surface segment spans residues 30–469; that stretch reads VTTVTLHFKQ…DGADINLMPI (440 aa). The interval 36-88 is hypervariable stalk region; the sequence is HFKQYECDSPANNQVMPCEPIIIERNITEIVYLTNTTIEKEICPKLVEYRNWS. N-linked (GlcNAc...) asparagine; by host glycans are attached at residues Asn61, Asn70, and Asn86. The segment at 91 to 469 is head of neuraminidase; that stretch reads QCKITGFAPF…DGADINLMPI (379 aa). Cystine bridges form between Cys92-Cys417, Cys124-Cys129, Cys183-Cys230, Cys232-Cys237, Cys278-Cys291, Cys280-Cys289, Cys318-Cys337, and Cys421-Cys447. Arg118 serves as a coordination point for substrate. Residue Asn146 is glycosylated (N-linked (GlcNAc...) asparagine; by host). Residue Asp151 is the Proton donor/acceptor of the active site. Residue Arg152 participates in substrate binding. Residues Asn200 and Asn234 are each glycosylated (N-linked (GlcNAc...) asparagine; by host). 276-277 serves as a coordination point for substrate; sequence EE. Arg292 provides a ligand contact to substrate. Asp293, Gly297, and Asp324 together coordinate Ca(2+). Position 371 (Arg371) interacts with substrate. Asn402 carries an N-linked (GlcNAc...) asparagine; by host glycan. Catalysis depends on Tyr406, which acts as the Nucleophile.

It belongs to the glycosyl hydrolase 34 family. In terms of assembly, homotetramer. Ca(2+) is required as a cofactor. Post-translationally, N-glycosylated.

It is found in the virion membrane. The protein resides in the host apical cell membrane. It catalyses the reaction Hydrolysis of alpha-(2-&gt;3)-, alpha-(2-&gt;6)-, alpha-(2-&gt;8)- glycosidic linkages of terminal sialic acid residues in oligosaccharides, glycoproteins, glycolipids, colominic acid and synthetic substrates.. Inhibited by the neuraminidase inhibitors zanamivir (Relenza) and oseltamivir (Tamiflu). These drugs interfere with the release of progeny virus from infected cells and are effective against all influenza strains. Resistance to neuraminidase inhibitors is quite rare. In terms of biological role, catalyzes the removal of terminal sialic acid residues from viral and cellular glycoconjugates. Cleaves off the terminal sialic acids on the glycosylated HA during virus budding to facilitate virus release. Additionally helps virus spread through the circulation by further removing sialic acids from the cell surface. These cleavages prevent self-aggregation and ensure the efficient spread of the progeny virus from cell to cell. Otherwise, infection would be limited to one round of replication. Described as a receptor-destroying enzyme because it cleaves a terminal sialic acid from the cellular receptors. May facilitate viral invasion of the upper airways by cleaving the sialic acid moieties on the mucin of the airway epithelial cells. Likely to plays a role in the budding process through its association with lipid rafts during intracellular transport. May additionally display a raft-association independent effect on budding. Plays a role in the determination of host range restriction on replication and virulence. Sialidase activity in late endosome/lysosome traffic seems to enhance virus replication. The polypeptide is Neuraminidase (Aves (whales)).